A 389-amino-acid polypeptide reads, in one-letter code: Phospho-N-acetylmuramoyl-pentapeptide-transferase (389 aa).

Helical transmembrane passes span 25–45 (RAVM…PWVI), 73–93 (TMGG…WGDL), 97–117 (FIWI…VDDY), 135–155 (FWQS…VSEA), 190–210 (ISYP…IVGA), 222–242 (GLVI…AYVM), 258–278 (GAGE…AFLW), 286–306 (VFMG…VAVI), 311–331 (IVLF…MLQV), and 366–386 (QVVV…LSTL).

It belongs to the glycosyltransferase 4 family. MraY subfamily. Mg(2+) is required as a cofactor.

Its subcellular location is the cell inner membrane. It catalyses the reaction UDP-N-acetyl-alpha-D-muramoyl-L-alanyl-gamma-D-glutamyl-meso-2,6-diaminopimeloyl-D-alanyl-D-alanine + di-trans,octa-cis-undecaprenyl phosphate = di-trans,octa-cis-undecaprenyl diphospho-N-acetyl-alpha-D-muramoyl-L-alanyl-D-glutamyl-meso-2,6-diaminopimeloyl-D-alanyl-D-alanine + UMP. The protein operates within cell wall biogenesis; peptidoglycan biosynthesis. Catalyzes the initial step of the lipid cycle reactions in the biosynthesis of the cell wall peptidoglycan: transfers peptidoglycan precursor phospho-MurNAc-pentapeptide from UDP-MurNAc-pentapeptide onto the lipid carrier undecaprenyl phosphate, yielding undecaprenyl-pyrophosphoryl-MurNAc-pentapeptide, known as lipid I. The chain is Phospho-N-acetylmuramoyl-pentapeptide-transferase from Burkholderia mallei (strain NCTC 10247).